A 126-amino-acid polypeptide reads, in one-letter code: Acidic phospholipase A2 4 (126 aa).

Residue serine 1 is a signal peptide. Residues 2–7 (NRPMPL) constitute a propeptide that is removed on maturation. Disulfide bonds link cysteine 18–cysteine 78, cysteine 33–cysteine 125, cysteine 35–cysteine 51, cysteine 50–cysteine 106, cysteine 57–cysteine 99, cysteine 67–cysteine 92, and cysteine 85–cysteine 97. The Ca(2+) site is built by tyrosine 34, glycine 36, and glycine 38. Histidine 54 is a catalytic residue. A Ca(2+)-binding site is contributed by aspartate 55. Aspartate 100 is an active-site residue.

This sequence belongs to the phospholipase A2 family. Group I subfamily. D49 sub-subfamily. In terms of assembly, monomer. Requires Ca(2+) as cofactor. As to expression, expressed by the venom gland.

It localises to the secreted. It carries out the reaction a 1,2-diacyl-sn-glycero-3-phosphocholine + H2O = a 1-acyl-sn-glycero-3-phosphocholine + a fatty acid + H(+). Its function is as follows. Snake venom phospholipase A2 (PLA2) that exhibits strong anticoagulant activity, which is not due to the catalytic activity. PLA2 catalyzes the calcium-dependent hydrolysis of the 2-acyl groups in 3-sn-phosphoglycerides. This chain is Acidic phospholipase A2 4, found in Naja sagittifera (Andaman cobra).